Reading from the N-terminus, the 143-residue chain is Deoxyuridine 5'-triphosphate nucleotidohydrolase (143 aa).

4 residues coordinate dUMP: Ser65, Val78, Arg132, and Gly138.

The protein belongs to the dUTPase family. As to quaternary structure, homotrimer. Mg(2+) serves as cofactor.

The enzyme catalyses dUTP + H2O = dUMP + diphosphate + H(+). Its pathway is pyrimidine metabolism; dUMP biosynthesis; dUMP from dCTP (dUTP route): step 2/2. Functionally, involved in nucleotide metabolism via production of dUMP, the immediate precursor of thymidine nucleotides, and decreases the intracellular concentration of dUTP so that uracil cannot be incorporated into DNA. This chain is Deoxyuridine 5'-triphosphate nucleotidohydrolase (DUT1), found in Antonospora locustae (Microsporidian parasite).